Here is a 455-residue protein sequence, read N- to C-terminus: Nucleoside-triphosphatase (455 aa).

The active-site Proton acceptor is the glutamate 168.

This sequence belongs to the GDA1/CD39 NTPase family.

It is found in the nucleus. The enzyme catalyses a ribonucleoside 5'-triphosphate + H2O = a ribonucleoside 5'-diphosphate + phosphate + H(+). In terms of biological role, might be involved in RNA transport out of nuclei. This chain is Nucleoside-triphosphatase, found in Pisum sativum (Garden pea).